Here is a 277-residue protein sequence, read N- to C-terminus: Large ribosomal subunit protein uL2 (277 aa).

The disordered stretch occupies residues 223–277 (VAMNPVDHPHGGGEGRTSTGRHPVTPWGKRTLGKKTRKRKASDKYIIRSRRARKR). Basic residues predominate over residues 253 to 277 (TLGKKTRKRKASDKYIIRSRRARKR).

Belongs to the universal ribosomal protein uL2 family. As to quaternary structure, part of the 50S ribosomal subunit. Forms a bridge to the 30S subunit in the 70S ribosome.

Functionally, one of the primary rRNA binding proteins. Required for association of the 30S and 50S subunits to form the 70S ribosome, for tRNA binding and peptide bond formation. It has been suggested to have peptidyltransferase activity; this is somewhat controversial. Makes several contacts with the 16S rRNA in the 70S ribosome. The protein is Large ribosomal subunit protein uL2 of Halothermothrix orenii (strain H 168 / OCM 544 / DSM 9562).